Here is a 222-residue protein sequence, read N- to C-terminus: MNEETSMDEGEQEKIELIMGLRRQGIRDKRVLSALERVPREKFISATFRKQAYEDHALPIECGQTISQPYIVAYMTEQLHVGERMKVLEVGTGSGYQAAVLSRLCRRVYTIERYRTLLKDAVKRLEDLHIHNVTAKVGDGAQGWPEQAPFDRIIVTAAAPSVPQKLVDQLKEGGLMIVPVAVSGARGEQKLVRIERTGDGVKREELLPVRFVPLVEGVAKES.

The active site involves serine 67.

This sequence belongs to the methyltransferase superfamily. L-isoaspartyl/D-aspartyl protein methyltransferase family.

The protein resides in the cytoplasm. The enzyme catalyses [protein]-L-isoaspartate + S-adenosyl-L-methionine = [protein]-L-isoaspartate alpha-methyl ester + S-adenosyl-L-homocysteine. Functionally, catalyzes the methyl esterification of L-isoaspartyl residues in peptides and proteins that result from spontaneous decomposition of normal L-aspartyl and L-asparaginyl residues. It plays a role in the repair and/or degradation of damaged proteins. This Parvibaculum lavamentivorans (strain DS-1 / DSM 13023 / NCIMB 13966) protein is Protein-L-isoaspartate O-methyltransferase.